The following is a 185-amino-acid chain: ATP-dependent protease subunit HslV (185 aa).

The active site involves Thr12. Na(+) is bound by residues Ala168, Cys171, and Thr174.

This sequence belongs to the peptidase T1B family. HslV subfamily. A double ring-shaped homohexamer of HslV is capped on each side by a ring-shaped HslU homohexamer. The assembly of the HslU/HslV complex is dependent on binding of ATP.

It is found in the cytoplasm. It carries out the reaction ATP-dependent cleavage of peptide bonds with broad specificity.. With respect to regulation, allosterically activated by HslU binding. In terms of biological role, protease subunit of a proteasome-like degradation complex believed to be a general protein degrading machinery. In Roseobacter denitrificans (strain ATCC 33942 / OCh 114) (Erythrobacter sp. (strain OCh 114)), this protein is ATP-dependent protease subunit HslV.